The chain runs to 782 residues: Endonuclease MutS2 (782 aa).

336–343 contributes to the ATP binding site; the sequence is GPNTGGKT. In terms of domain architecture, Smr spans 707 to 782; it reads LDLRGYRYDE…GFGVTVVEIK (76 aa).

The protein belongs to the DNA mismatch repair MutS family. MutS2 subfamily. As to quaternary structure, homodimer. Binds to stalled ribosomes, contacting rRNA.

In terms of biological role, endonuclease that is involved in the suppression of homologous recombination and thus may have a key role in the control of bacterial genetic diversity. Acts as a ribosome collision sensor, splitting the ribosome into its 2 subunits. Detects stalled/collided 70S ribosomes which it binds and splits by an ATP-hydrolysis driven conformational change. Acts upstream of the ribosome quality control system (RQC), a ribosome-associated complex that mediates the extraction of incompletely synthesized nascent chains from stalled ribosomes and their subsequent degradation. Probably generates substrates for RQC. The protein is Endonuclease MutS2 of Staphylococcus saprophyticus subsp. saprophyticus (strain ATCC 15305 / DSM 20229 / NCIMB 8711 / NCTC 7292 / S-41).